A 472-amino-acid chain; its full sequence is 3-isopropylmalate dehydratase large subunit (472 aa).

3 residues coordinate [4Fe-4S] cluster: C347, C407, and C410.

Belongs to the aconitase/IPM isomerase family. LeuC type 1 subfamily. As to quaternary structure, heterodimer of LeuC and LeuD. [4Fe-4S] cluster serves as cofactor.

The catalysed reaction is (2R,3S)-3-isopropylmalate = (2S)-2-isopropylmalate. Its pathway is amino-acid biosynthesis; L-leucine biosynthesis; L-leucine from 3-methyl-2-oxobutanoate: step 2/4. Catalyzes the isomerization between 2-isopropylmalate and 3-isopropylmalate, via the formation of 2-isopropylmaleate. This Bacillus subtilis (strain 168) protein is 3-isopropylmalate dehydratase large subunit.